Reading from the N-terminus, the 223-residue chain is HTH-type transcriptional dual regulator CecR (223 aa).

The HTH tetR-type domain occupies 11 to 70 (EQAKKQLIAAALAQFGEYGMNATTREIAAQAGQNIAAITYYFGSKEDLYLACAQWIADFI). The segment at residues 33–52 (TTREIAAQAGQNIAAITYYF) is a DNA-binding region (H-T-H motif).

The protein localises to the cytoplasm. In terms of biological role, regulates transcription of the cecR-ybhGFSR operon and the rhlE gene, which altogether are involved in the control of sensitivity to cefoperazone and chloramphenicol. Represses the cecR-ybhGFSR operon and activates the rhlE operon. Acts by binding to a palindromic sequence within the intergenic spacer located between these two divergently transcribed operons. This Shigella flexneri protein is HTH-type transcriptional dual regulator CecR.